The sequence spans 140 residues: MAKKITGYIKLQIPAGKANPSPPIGPALGQHGVNIMEFCKAFNAKTQGDEGTITPVVITVYADRSFSFITKVPPMSVLIKKAVGIESGSSVPNKNKVGTLTAEQVKEIAVKKMPDMNAASLEAAMRTVEGTARSMGVEIV.

This sequence belongs to the universal ribosomal protein uL11 family. Part of the ribosomal stalk of the 50S ribosomal subunit. Interacts with L10 and the large rRNA to form the base of the stalk. L10 forms an elongated spine to which L12 dimers bind in a sequential fashion forming a multimeric L10(L12)X complex. One or more lysine residues are methylated.

Functionally, forms part of the ribosomal stalk which helps the ribosome interact with GTP-bound translation factors. In Geobacter metallireducens (strain ATCC 53774 / DSM 7210 / GS-15), this protein is Large ribosomal subunit protein uL11.